The sequence spans 631 residues: Phosphomethylpyrimidine synthase (631 aa).

Substrate is bound by residues Asn-239, Met-268, Tyr-297, His-333, 353–355, 394–397, and Glu-433; these read SRG and DGLR. Residue His-437 coordinates Zn(2+). Substrate is bound at residue Tyr-460. Residue His-501 coordinates Zn(2+). 3 residues coordinate [4Fe-4S] cluster: Cys-581, Cys-584, and Cys-589.

It belongs to the ThiC family. In terms of assembly, homodimer. [4Fe-4S] cluster serves as cofactor.

The catalysed reaction is 5-amino-1-(5-phospho-beta-D-ribosyl)imidazole + S-adenosyl-L-methionine = 4-amino-2-methyl-5-(phosphooxymethyl)pyrimidine + CO + 5'-deoxyadenosine + formate + L-methionine + 3 H(+). Its pathway is cofactor biosynthesis; thiamine diphosphate biosynthesis. In terms of biological role, catalyzes the synthesis of the hydroxymethylpyrimidine phosphate (HMP-P) moiety of thiamine from aminoimidazole ribotide (AIR) in a radical S-adenosyl-L-methionine (SAM)-dependent reaction. This Escherichia coli O139:H28 (strain E24377A / ETEC) protein is Phosphomethylpyrimidine synthase.